Here is a 455-residue protein sequence, read N- to C-terminus: Phosphoglucosamine/phosphogalactosamine mutase (455 aa).

The active-site Phosphoserine intermediate is serine 97. The Mg(2+) site is built by serine 97, aspartate 241, aspartate 243, and aspartate 245. Serine 97 carries the phosphoserine modification.

This sequence belongs to the phosphohexose mutase family. Mg(2+) is required as a cofactor. In terms of processing, activated by phosphorylation.

The enzyme catalyses alpha-D-glucosamine 1-phosphate = D-glucosamine 6-phosphate. The catalysed reaction is D-galactosamine 6-phosphate = alpha-D-galactosamine 1-phosphate. Functionally, involved in the synthesis of UDP-N-acetylglucosamine (UDP-GlcNAc) and UDP-N-acetylgalactosamine (UDP-GalNAc). Catalyzes the conversion of glucosamine-6-phosphate to glucosamine-1-phosphate and of galactosamine-6-phosphate to galactosamine-1-phosphate. The sequence is that of Phosphoglucosamine/phosphogalactosamine mutase from Sulfurisphaera tokodaii (strain DSM 16993 / JCM 10545 / NBRC 100140 / 7) (Sulfolobus tokodaii).